The primary structure comprises 61 residues: Small ribosomal subunit protein uS14 (61 aa).

Residues Cys24, Cys27, Cys40, and Cys43 each contribute to the Zn(2+) site.

Belongs to the universal ribosomal protein uS14 family. Zinc-binding uS14 subfamily. In terms of assembly, part of the 30S ribosomal subunit. Contacts proteins S3 and S10. It depends on Zn(2+) as a cofactor.

Its function is as follows. Binds 16S rRNA, required for the assembly of 30S particles and may also be responsible for determining the conformation of the 16S rRNA at the A site. The protein is Small ribosomal subunit protein uS14 of Sulfurovum sp. (strain NBC37-1).